The sequence spans 468 residues: 3-isopropylmalate dehydratase large subunit (468 aa).

[4Fe-4S] cluster contacts are provided by C347, C407, and C410.

Belongs to the aconitase/IPM isomerase family. LeuC type 1 subfamily. As to quaternary structure, heterodimer of LeuC and LeuD. [4Fe-4S] cluster serves as cofactor.

The enzyme catalyses (2R,3S)-3-isopropylmalate = (2S)-2-isopropylmalate. The protein operates within amino-acid biosynthesis; L-leucine biosynthesis; L-leucine from 3-methyl-2-oxobutanoate: step 2/4. Its function is as follows. Catalyzes the isomerization between 2-isopropylmalate and 3-isopropylmalate, via the formation of 2-isopropylmaleate. This Synechococcus sp. (strain CC9311) protein is 3-isopropylmalate dehydratase large subunit.